The primary structure comprises 127 residues: Large ribosomal subunit protein eL8 (127 aa).

This sequence belongs to the eukaryotic ribosomal protein eL8 family. As to quaternary structure, part of the 50S ribosomal subunit. Probably part of the RNase P complex.

It is found in the cytoplasm. Its function is as follows. Multifunctional RNA-binding protein that recognizes the K-turn motif in ribosomal RNA, the RNA component of RNase P, box H/ACA, box C/D and box C'/D' sRNAs. This Aeropyrum pernix (strain ATCC 700893 / DSM 11879 / JCM 9820 / NBRC 100138 / K1) protein is Large ribosomal subunit protein eL8.